Consider the following 430-residue polypeptide: Trigger factor (430 aa).

Residues 157–242 (GDLVALETWS…AVEVSEPVLP (86 aa)) form the PPIase FKBP-type domain.

Belongs to the FKBP-type PPIase family. Tig subfamily.

It is found in the cytoplasm. The enzyme catalyses [protein]-peptidylproline (omega=180) = [protein]-peptidylproline (omega=0). Involved in protein export. Acts as a chaperone by maintaining the newly synthesized protein in an open conformation. Functions as a peptidyl-prolyl cis-trans isomerase. The chain is Trigger factor from Xanthomonas euvesicatoria pv. vesicatoria (strain 85-10) (Xanthomonas campestris pv. vesicatoria).